The sequence spans 229 residues: Transmembrane emp24 domain-containing protein 5 (229 aa).

A signal peptide spans 1-27 (MGDKIWLPFPVLLLAALPPVLLPGAAG). Residues 28 to 196 (FTPSLDSDFT…IQESNFDRVN (169 aa)) are Lumenal-facing. The region spanning 45–126 (RECFYQPMPL…EKVIFFELIL (82 aa)) is the GOLD domain. The chain crosses the membrane as a helical span at residues 197–217 (FWSMVNLVVMVVVSAIQVYML). Topologically, residues 218–229 (KSLFEDKRKSRT) are cytoplasmic.

It belongs to the EMP24/GP25L family. In terms of assembly, interacts with TMED9 and TMED10.

The protein resides in the endoplasmic reticulum membrane. The protein localises to the golgi apparatus. It localises to the cis-Golgi network membrane. Its subcellular location is the endoplasmic reticulum-Golgi intermediate compartment membrane. In terms of biological role, potential role in vesicular protein trafficking, mainly in the early secretory pathway. Required for the maintenance of the Golgi apparatus; involved in protein exchange between Golgi stacks during assembly. Probably not required for COPI-vesicle-mediated retrograde transport. In Pongo abelii (Sumatran orangutan), this protein is Transmembrane emp24 domain-containing protein 5 (TMED5).